A 61-amino-acid chain; its full sequence is MTTVKFKYKGEEKEVDISKIKKVWRVGKMISFTYDDNGKTGRGAVSEKDAPKELLEKLEKK.

Positions 37–61 (NGKTGRGAVSEKDAPKELLEKLEKK) are disordered. Residues 45-61 (VSEKDAPKELLEKLEKK) are compositionally biased toward basic and acidic residues.

This sequence belongs to the 7 kDa DNA-binding/endoribonuclease P2 family. In terms of assembly, monomer.

Its subcellular location is the cytoplasm. Functionally, can constrain negative DNA supercoils. May be involved in maintaining the integrity of the genome at high temperature. The polypeptide is DNA-binding protein 7a (Acidianus hospitalis (strain W1)).